The sequence spans 202 residues: uncharacterized protein (202 aa).

Residues 1 to 6 (MITDFL) are Cytoplasmic-facing. A helical; Signal-anchor for type II membrane protein transmembrane segment spans residues 7-23 (LAFSILAVSTTLGVSNL). The Extracellular segment spans residues 24–202 (NKQCRDLLQC…KNGKTRGHSG (179 aa)). N-linked (GlcNAc...) asparagine glycosylation occurs at Asn53.

It localises to the membrane. This is an uncharacterized protein from Caenorhabditis elegans.